The primary structure comprises 438 residues: Trigger factor (438 aa).

Residues 160 to 245 form the PPIase FKBP-type domain; it reads DDKVTIDFVG…VKKIQQAELP (86 aa).

It belongs to the FKBP-type PPIase family. Tig subfamily.

Its subcellular location is the cytoplasm. The enzyme catalyses [protein]-peptidylproline (omega=180) = [protein]-peptidylproline (omega=0). Its function is as follows. Involved in protein export. Acts as a chaperone by maintaining the newly synthesized protein in an open conformation. Functions as a peptidyl-prolyl cis-trans isomerase. This chain is Trigger factor, found in Francisella tularensis subsp. novicida (strain U112).